A 341-amino-acid polypeptide reads, in one-letter code: Endoglucanase 1 (341 aa).

The signal sequence occupies residues methionine 1–alanine 16. Positions leucine 17–arginine 30 are excised as a propeptide. Glutamate 166 functions as the Proton donor in the catalytic mechanism. The Nucleophile role is filled by glutamate 275.

The protein belongs to the glycosyl hydrolase 5 (cellulase A) family.

It carries out the reaction Endohydrolysis of (1-&gt;4)-beta-D-glucosidic linkages in cellulose, lichenin and cereal beta-D-glucans.. Has endoglucanase activity on carboxymethyl-cellulose (CMC). This chain is Endoglucanase 1 (CMC1), found in Saitozyma flava (Cryptococcus flavus).